We begin with the raw amino-acid sequence, 233 residues long: Glycolipid transfer protein 3 (233 aa).

Residues Asp-79, Asn-83, Trp-126, and His-165 each coordinate a ganglioside GM3 (d18:1(4E)).

Belongs to the GLTP family.

Functionally, may be involved in glycolipids transfer. This is Glycolipid transfer protein 3 from Arabidopsis thaliana (Mouse-ear cress).